A 307-amino-acid chain; its full sequence is Low-salt glycan biosynthesis hexosyltransferase Agl10 (307 aa).

This sequence belongs to the glycosyltransferase 2 family.

It functions in the pathway protein modification; protein glycosylation. Its pathway is cell surface structure biogenesis; S-layer biogenesis. Functionally, hexosyltransferase involved in N-glycan biosynthetic pathway that takes place under low-salt conditions (1.75 M instead of 3.4 M). Participates in the formation of the tetrasaccharide present at 'Asn-532' of S-layer glycoprotein Csg, consisting of a sulfated hexose, 2 hexoses and rhamnose. Involved in the addition of final rhamnose (sugar 4) of the tetrasaccharide on the dolichol phosphate carrier. This Haloferax volcanii (strain ATCC 29605 / DSM 3757 / JCM 8879 / NBRC 14742 / NCIMB 2012 / VKM B-1768 / DS2) (Halobacterium volcanii) protein is Low-salt glycan biosynthesis hexosyltransferase Agl10 (agl10).